The sequence spans 303 residues: Probable cell division protein WhiA (303 aa).

The segment at residues 272 to 303 (SIQQVADALEFPITKSGVNHRLRKINKIADDL) is a DNA-binding region (H-T-H motif).

The protein belongs to the WhiA family.

Its function is as follows. Involved in cell division and chromosome segregation. The chain is Probable cell division protein WhiA from Streptococcus pyogenes serotype M1.